The following is a 463-amino-acid chain: Interferon-inducible GTPase 5 (463 aa).

The 183-residue stretch at 53–235 (IRLEVGVTGE…PTLVSTWEHD (183 aa)) folds into the IRG-type G domain. GTP contacts are provided by residues 62–69 (ESGAGKSS), 87–91 (TGVME), 169–171 (KVD), and 216–218 (SNL). Phosphoserine is present on residues Ser-247 and Ser-304. Residues 404–437 (LEDDEPQPEVSLEVASDNGVEKGGSGEGGGEEAP) are disordered.

This sequence belongs to the TRAFAC class dynamin-like GTPase superfamily. IRG family. As to expression, abundantly expressed in semen (at protein level).

It localises to the cell projection. The protein localises to the cilium. Its subcellular location is the flagellum. It is found in the lipid droplet. The catalysed reaction is GTP + H2O = GDP + phosphate + H(+). Required for sperm motility and therefore male fertility, via positive regulation of spermatozoa fibrous sheath formation. The polypeptide is Interferon-inducible GTPase 5 (Homo sapiens (Human)).